The chain runs to 500 residues: Chromosomal replication initiator protein DnaA (500 aa).

Residues 1–37 (MSDTPFGDADHPRPAPIHPDAVLPPPMSSQSADNDPT) are disordered. Residues 1–103 (MSDTPFGDAD…EELLSDHFHK (103 aa)) form a domain I, interacts with DnaA modulators region. Over residues 14–27 (PAPIHPDAVLPPPM) the composition is skewed to pro residues. The tract at residues 103-161 (KAIHLAITIDPDLELALGAPDHEDEEEEVPPAQFVPKVTVGVTEPSARPTTTIDDDEGN) is domain II. Residues 162-378 (RLNPKYTFDS…GALIRVTAFA (217 aa)) form a domain III, AAA+ region region. Positions 206, 208, 209, and 210 each coordinate ATP. The segment at 379-500 (SLNQQPVDIS…SEITNRIKQY (122 aa)) is domain IV, binds dsDNA.

Belongs to the DnaA family. Oligomerizes as a right-handed, spiral filament on DNA at oriC.

Its subcellular location is the cytoplasm. Plays an essential role in the initiation and regulation of chromosomal replication. ATP-DnaA binds to the origin of replication (oriC) to initiate formation of the DNA replication initiation complex once per cell cycle. Binds the DnaA box (a 9 base pair repeat at the origin) and separates the double-stranded (ds)DNA. Forms a right-handed helical filament on oriC DNA; dsDNA binds to the exterior of the filament while single-stranded (ss)DNA is stabiized in the filament's interior. The ATP-DnaA-oriC complex binds and stabilizes one strand of the AT-rich DNA unwinding element (DUE), permitting loading of DNA polymerase. After initiation quickly degrades to an ADP-DnaA complex that is not apt for DNA replication. Binds acidic phospholipids. In Cutibacterium acnes (strain DSM 16379 / KPA171202) (Propionibacterium acnes), this protein is Chromosomal replication initiator protein DnaA.